Reading from the N-terminus, the 308-residue chain is Ribosomal RNA small subunit methyltransferase H (308 aa).

S-adenosyl-L-methionine is bound by residues 36–38 (GGH), aspartate 55, phenylalanine 86, aspartate 103, and glutamine 110.

Belongs to the methyltransferase superfamily. RsmH family.

It localises to the cytoplasm. It catalyses the reaction cytidine(1402) in 16S rRNA + S-adenosyl-L-methionine = N(4)-methylcytidine(1402) in 16S rRNA + S-adenosyl-L-homocysteine + H(+). In terms of biological role, specifically methylates the N4 position of cytidine in position 1402 (C1402) of 16S rRNA. This is Ribosomal RNA small subunit methyltransferase H from Helicobacter pylori (strain G27).